The sequence spans 398 residues: MRLREPLLSGSAAMPGASLQRACRLLVAVCALHLGVTLVYYLAGRDLSRLPQLVGVSTPLQGGSNSAAAIGQSSGELRTGGARPPPPLGASSQPRPGGDSSPVVDSGPGPASNLTSVPVPHTTALSLPACPEESPLLVGPMLIEFNMPVDLELVAKQNPNVKMGGRYAPRDCVSPHKVAIIIPFRNRQEHLKYWLYYLHPVLQRQQLDYGIYVINQAGDTIFNRAKLLNVGFQEALKDYDYTCFVFSDVDLIPMNDHNAYRCFSQPRHISVAMDKFGFSLPYVQYFGGVSALSKQQFLTINGFPNNYWGWGGEDDDIFNRLVFRGMSISRPNAVVGRCRMIRHSRDKKNEPNPQRFDRIAHTKETMLSDGLNSLTYQVLDVQRYPLYTQITVDIGTPS.

Residues 1–24 (MRLREPLLSGSAAMPGASLQRACR) lie on the Cytoplasmic side of the membrane. Residues 25 to 44 (LLVAVCALHLGVTLVYYLAG) form a helical; Signal-anchor for type II membrane protein membrane-spanning segment. Topologically, residues 45–398 (RDLSRLPQLV…QITVDIGTPS (354 aa)) are lumenal. The segment covering 61–76 (QGGSNSAAAIGQSSGE) has biased composition (polar residues). The tract at residues 61–117 (QGGSNSAAAIGQSSGELRTGGARPPPPLGASSQPRPGGDSSPVVDSGPGPASNLTSV) is disordered. Asn113 carries N-linked (GlcNAc...) asparagine glycosylation. Cys130 and Cys172 are disulfide-bonded. UDP-alpha-D-galactose-binding positions include 183-187 (PFRNR), 222-224 (FNR), 249-250 (VD), and Trp310. An intrachain disulfide couples Cys243 to Cys262. Asp250 contacts Mn(2+). 312–315 (GEDD) serves as a coordination point for N-acetyl-D-glucosamine. Residue His343 participates in Mn(2+) binding. Position 343 to 346 (343 to 346 (HSRD)) interacts with UDP-alpha-D-galactose. Arg355 is a binding site for N-acetyl-D-glucosamine.

The protein belongs to the glycosyltransferase 7 family. Homodimer; and heterodimer with alpha-lactalbumin to form lactose synthase. Interacts (via N-terminal cytoplasmic domain) with UBE2Q1 (via N-terminus); the interaction is direct. Mn(2+) is required as a cofactor. The soluble form derives from the membrane forms by proteolytic processing. In terms of tissue distribution, ubiquitously expressed, but at very low levels in fetal and adult brain.

It is found in the golgi apparatus. The protein resides in the golgi stack membrane. The protein localises to the cell membrane. Its subcellular location is the cell surface. It localises to the cell projection. It is found in the filopodium. The protein resides in the secreted. The enzyme catalyses D-glucose + UDP-alpha-D-galactose = lactose + UDP + H(+). It carries out the reaction an N-acetyl-beta-D-glucosaminyl derivative + UDP-alpha-D-galactose = a beta-D-galactosyl-(1-&gt;4)-N-acetyl-beta-D-glucosaminyl derivative + UDP + H(+). It catalyses the reaction N-acetyl-D-glucosamine + UDP-alpha-D-galactose = beta-D-galactosyl-(1-&gt;4)-N-acetyl-D-glucosamine + UDP + H(+). The catalysed reaction is a beta-D-GlcNAc-(1-&gt;3)-beta-D-Gal-(1-&gt;4)-beta-D-Glc-(1&lt;-&gt;1)-Cer(d18:1(4E)) + UDP-alpha-D-galactose = a neolactoside nLc4Cer(d18:1(4E)) + UDP + H(+). The enzyme catalyses a beta-D-glucosylceramide + UDP-alpha-D-galactose = a beta-D-galactosyl-(1-&gt;4)-beta-D-glucosyl-(1&lt;-&gt;1)-ceramide + UDP + H(+). It carries out the reaction a neolactoside IV(3)-beta-GlcNAc-nLc4Cer + UDP-alpha-D-galactose = a neolactoside nLc6Cer + UDP + H(+). The protein operates within protein modification; protein glycosylation. Functionally, the Golgi complex form catalyzes the production of lactose in the lactating mammary gland and could also be responsible for the synthesis of complex-type N-linked oligosaccharides in many glycoproteins as well as the carbohydrate moieties of glycolipids. Its function is as follows. The cell surface form functions as a recognition molecule during a variety of cell to cell and cell to matrix interactions, as those occurring during development and egg fertilization, by binding to specific oligosaccharide ligands on opposing cells or in the extracellular matrix. The polypeptide is Beta-1,4-galactosyltransferase 1 (Homo sapiens (Human)).